A 505-amino-acid polypeptide reads, in one-letter code: ATP synthase subunit alpha (505 aa).

170–177 serves as a coordination point for ATP; the sequence is GDRQTGKT.

The protein belongs to the ATPase alpha/beta chains family. In terms of assembly, F-type ATPases have 2 components, CF(1) - the catalytic core - and CF(0) - the membrane proton channel. CF(1) has five subunits: alpha(3), beta(3), gamma(1), delta(1), epsilon(1). CF(0) has four main subunits: a(1), b(1), b'(1) and c(9-12).

The protein resides in the cellular thylakoid membrane. The enzyme catalyses ATP + H2O + 4 H(+)(in) = ADP + phosphate + 5 H(+)(out). In terms of biological role, produces ATP from ADP in the presence of a proton gradient across the membrane. The alpha chain is a regulatory subunit. In Prochlorococcus marinus (strain MIT 9313), this protein is ATP synthase subunit alpha.